The following is a 104-amino-acid chain: UPF0145 protein TM1040_1243 (104 aa).

This sequence belongs to the UPF0145 family.

In Ruegeria sp. (strain TM1040) (Silicibacter sp.), this protein is UPF0145 protein TM1040_1243.